We begin with the raw amino-acid sequence, 95 residues long: Large ribosomal subunit protein bL25 (95 aa).

Belongs to the bacterial ribosomal protein bL25 family. Part of the 50S ribosomal subunit; part of the 5S rRNA/L5/L18/L25 subcomplex. Contacts the 5S rRNA. Binds to the 5S rRNA independently of L5 and L18.

This is one of the proteins that binds to the 5S RNA in the ribosome where it forms part of the central protuberance. This Shewanella baltica (strain OS223) protein is Large ribosomal subunit protein bL25.